An 860-amino-acid chain; its full sequence is DNA mismatch repair protein MutS (860 aa).

607–614 (GPNMSGKS) contributes to the ATP binding site.

The protein belongs to the DNA mismatch repair MutS family.

Functionally, this protein is involved in the repair of mismatches in DNA. It is possible that it carries out the mismatch recognition step. This protein has a weak ATPase activity. This chain is DNA mismatch repair protein MutS, found in Listeria welshimeri serovar 6b (strain ATCC 35897 / DSM 20650 / CCUG 15529 / CIP 8149 / NCTC 11857 / SLCC 5334 / V8).